The following is a 38-amino-acid chain: Large ribosomal subunit protein bL36 (38 aa).

It belongs to the bacterial ribosomal protein bL36 family.

The sequence is that of Large ribosomal subunit protein bL36 from Bacteroides fragilis (strain ATCC 25285 / DSM 2151 / CCUG 4856 / JCM 11019 / LMG 10263 / NCTC 9343 / Onslow / VPI 2553 / EN-2).